A 265-amino-acid polypeptide reads, in one-letter code: Small ribosomal subunit protein uS2 (265 aa).

It belongs to the universal ribosomal protein uS2 family.

This is Small ribosomal subunit protein uS2 from Ligilactobacillus salivarius (strain UCC118) (Lactobacillus salivarius).